A 490-amino-acid polypeptide reads, in one-letter code: Cysteine desulfurase, mitochondrial (490 aa).

Pyridoxal 5'-phosphate is bound by residues 161–162 (AT), N241, Q269, and 289–291 (SSH). K292 carries the post-translational modification N6-(pyridoxal phosphate)lysine. T329 is a binding site for pyridoxal 5'-phosphate. C414 acts as the Cysteine persulfide intermediate in catalysis. C414 lines the [2Fe-2S] cluster pocket.

The protein belongs to the class-V pyridoxal-phosphate-dependent aminotransferase family. NifS/IscS subfamily. It depends on pyridoxal 5'-phosphate as a cofactor.

It localises to the mitochondrion. It carries out the reaction (sulfur carrier)-H + L-cysteine = (sulfur carrier)-SH + L-alanine. In terms of biological role, catalyzes the removal of elemental sulfur from cysteine to produce alanine. It supplies the inorganic sulfur for iron-sulfur (Fe-S) clusters. Plays a role in both tRNA-processing and mitochondrial metabolism. Involved in the 2-thio-modification of both 5-carboxymethylaminomethyl-2-thiouridine in mitochondrial tRNAs and 5-methoxycarbonylmethyl-2-thiouridine (mcm5s2U) in cytoplasmic tRNAs. This is Cysteine desulfurase, mitochondrial from Eremothecium gossypii (strain ATCC 10895 / CBS 109.51 / FGSC 9923 / NRRL Y-1056) (Yeast).